The following is a 663-amino-acid chain: Probable peptidyl-glycine alpha-amidating monooxygenase pamn-1 (663 aa).

The first 21 residues, 1 to 21 (MNDRISINLIYLVLTFCCVSA), serve as a signal peptide directing secretion. The peptidylglycine alpha-hydroxylating monooxygenase stretch occupies residues 1–300 (MNDRISINLI…YDAKLDNPYP (300 aa)). The Cu(2+) site is built by His-75 and His-76. Cys-82 and Cys-98 form a disulfide bridge. His-142 serves as a coordination point for Cu(2+). N-linked (GlcNAc...) asparagine glycosylation occurs at Asn-191. Cystine bridges form between Cys-194-Cys-305 and Cys-261-Cys-283. Cu(2+)-binding residues include His-210 and His-212. Asn-269 carries N-linked (GlcNAc...) asparagine glycosylation. Cu(2+) is bound at residue Met-282. The tract at residues 301-663 (QGAICAKDYP…WQFKIRHDQN (363 aa)) is peptidyl-alpha-hydroxyglycine alpha-amidating lyase. Arg-376 contacts a protein. Residue Asn-411 is glycosylated (N-linked (GlcNAc...) asparagine). NHL repeat units lie at residues 411 to 454 (NQTK…WKIE), 464 to 507 (SGEL…LDLN), 511 to 554 (IRQF…MTTQ), and 626 to 656 (FGQPHCLRVCPDGGHIFVGDIAEGKARLWQF). A disulfide bridge connects residues Cys-478 and Cys-497. A protein is bound by residues Tyr-496 and Arg-543.

The protein in the C-terminal section; belongs to the peptidyl-alpha-hydroxyglycine alpha-amidating lyase family. It in the N-terminal section; belongs to the copper type II ascorbate-dependent monooxygenase family. Monomer. Zn(2+) is required as a cofactor. The cofactor is Cu(2+).

It localises to the secreted. It carries out the reaction a [peptide]-C-terminal glycine + 2 L-ascorbate + O2 = a [peptide]-C-terminal (2S)-2-hydroxyglycine + 2 monodehydro-L-ascorbate radical + H2O. The catalysed reaction is a [peptide]-C-terminal (2S)-2-hydroxyglycine = a [peptide]-C-terminal amide + glyoxylate. Its function is as follows. Probable bifunctional enzyme that catalyzes 2 sequential steps in C-terminal alpha-amidation of peptides. The monooxygenase part produces an unstable peptidyl(2-hydroxyglycine) intermediate that is dismutated to glyoxylate and the corresponding desglycine peptide amide by the lyase part. C-terminal amidation of peptides such as neuropeptides is essential for full biological activity. In Caenorhabditis elegans, this protein is Probable peptidyl-glycine alpha-amidating monooxygenase pamn-1.